Consider the following 240-residue polypeptide: uncharacterized protein (240 aa).

Positions 26–52 (DYVDDGESLPTRQSVKNQREQKKKQGK) are disordered. The helical transmembrane segment at 57–77 (LFTVLAVIFVFVPVIVLVTLF) threads the bilayer. Residues 100–185 (KYEVVPKSED…QPAEPVQNVP (86 aa)) form a disordered region. A compositionally biased stretch (basic and acidic residues) spans 103–159 (VVPKSEDKNDTADTKETALQKESKKEPEDSKPKEQTAADKKQTAVAEKEDSPNKEEA). Low complexity predominate over residues 160–185 (TAAAASSSQSTVQQQEQPAEPVQNVP). Positions 189-235 (VKHTVQKKETLYRISMKYYKSRTGEEKIRAYNHLNGNDVYTGQVLDI) constitute a LysM domain.

It is found in the membrane. This is an uncharacterized protein from Bacillus subtilis (strain 168).